The sequence spans 193 residues: Ubiquitin-conjugating enzyme E2 E1 (193 aa).

Residues 1–45 (MSDDDSRASTSSSSSSSSNQQTEKETNTPKKKESKVSMSKNSKLL) are disordered. S2 is subject to N-acetylserine. The segment covering 8–18 (ASTSSSSSSSS) has biased composition (low complexity). Over residues 22–35 (TEKETNTPKKKESK) the composition is skewed to basic and acidic residues. Polar residues predominate over residues 36–45 (VSMSKNSKLL). Positions 47-193 (TSAKRIQKEL…ARQWTKRYAT (147 aa)) constitute a UBC core domain. The active-site Glycyl thioester intermediate is the C131. K136 is covalently cross-linked (Glycyl lysine isopeptide (Lys-Gly) (interchain with G-Cter in ISG15)).

The protein belongs to the ubiquitin-conjugating enzyme family. Interacts with RNF14. ISGylation suppresses ubiquitin E2 enzyme activity. In terms of processing, autoubiquitinated in vitro.

The protein resides in the nucleus. It carries out the reaction S-ubiquitinyl-[E1 ubiquitin-activating enzyme]-L-cysteine + [E2 ubiquitin-conjugating enzyme]-L-cysteine = [E1 ubiquitin-activating enzyme]-L-cysteine + S-ubiquitinyl-[E2 ubiquitin-conjugating enzyme]-L-cysteine.. The enzyme catalyses S-ubiquitinyl-[E1 ubiquitin-activating enzyme]-L-cysteine + [acceptor protein]-L-lysine = [E1 ubiquitin-activating enzyme]-L-cysteine + N(6)-monoubiquitinyl-[acceptor protein]-L-lysine.. It functions in the pathway protein modification; protein ubiquitination. In terms of biological role, accepts ubiquitin from the E1 complex and catalyzes its covalent attachment to other proteins. Catalyzes the covalent attachment of ISG15 to other proteins. Mediates the selective degradation of short-lived and abnormal proteins. In vitro also catalyzes 'Lys-48'-linked polyubiquitination. Catalyzes monoubiquitination of other proteins in both an E3-dependent and E3-independent manner. The protein is Ubiquitin-conjugating enzyme E2 E1 of Homo sapiens (Human).